A 288-amino-acid polypeptide reads, in one-letter code: Probable chromosome 1-partitioning protein ParB (288 aa).

Belongs to the ParB family.

Functionally, involved in chromosome partition. Localize to both poles of the predivisional cell following completion of DNA replication. Binds to the DNA origin of replication. This Deinococcus radiodurans (strain ATCC 13939 / DSM 20539 / JCM 16871 / CCUG 27074 / LMG 4051 / NBRC 15346 / NCIMB 9279 / VKM B-1422 / R1) protein is Probable chromosome 1-partitioning protein ParB (parB1).